Reading from the N-terminus, the 697-residue chain is Gametogenetin-binding protein 2 (697 aa).

At serine 360 the chain carries Phosphoserine.

Interacts with GGN. In terms of tissue distribution, expressed in heart, brain, placenta, lung, liver, skeletal muscle, kidney and pancreas. Expressed more abundantly in heart, pancreas and skeletal muscle.

Its subcellular location is the cytoplasmic vesicle. In terms of biological role, may be involved in spermatogenesis. The polypeptide is Gametogenetin-binding protein 2 (GGNBP2) (Homo sapiens (Human)).